Here is a 333-residue protein sequence, read N- to C-terminus: L-lactate dehydrogenase B chain (333 aa).

NAD(+) contacts are provided by residues 29–57 and arginine 99; that span reads GQVG…LEDK. Positions 106, 138, and 169 each coordinate substrate. Asparagine 138 is an NAD(+) binding site. Histidine 193 functions as the Proton acceptor in the catalytic mechanism. Threonine 248 contacts substrate.

This sequence belongs to the LDH/MDH superfamily. LDH family. Homotetramer.

It is found in the cytoplasm. It catalyses the reaction (S)-lactate + NAD(+) = pyruvate + NADH + H(+). Its pathway is fermentation; pyruvate fermentation to lactate; (S)-lactate from pyruvate: step 1/1. Its function is as follows. Interconverts simultaneously and stereospecifically pyruvate and lactate with concomitant interconversion of NADH and NAD(+). This Pelodiscus sinensis japonicus (Chinese soft-shelled turtle) protein is L-lactate dehydrogenase B chain (LDHB).